The sequence spans 190 residues: Potassium-transporting ATPase KdpC subunit (190 aa).

Residues 10 to 30 (TFIFLLLITGGVYPLLTTVLG) traverse the membrane as a helical segment.

This sequence belongs to the KdpC family. As to quaternary structure, the system is composed of three essential subunits: KdpA, KdpB and KdpC.

The protein resides in the cell inner membrane. Part of the high-affinity ATP-driven potassium transport (or Kdp) system, which catalyzes the hydrolysis of ATP coupled with the electrogenic transport of potassium into the cytoplasm. This subunit acts as a catalytic chaperone that increases the ATP-binding affinity of the ATP-hydrolyzing subunit KdpB by the formation of a transient KdpB/KdpC/ATP ternary complex. This chain is Potassium-transporting ATPase KdpC subunit, found in Escherichia coli (strain SE11).